The following is a 640-amino-acid chain: PTS system mannitol-specific EIICBA component (640 aa).

The PTS EIIC type-2 domain occupies 12–343 (LGRFLSAMIM…LKISNRNHYV (332 aa)). 6 helical membrane passes run 24–45 (ISVFIAWGIISGLFIKSGWCPN), 50–70 (KVLSPISVYLFPILIANTGGY), 134–155 (SVGILGVLLLFISFLCIGPMIE), 165–185 (VNLMINNHLLPFIAILIEPAK), 273–292 (LILGSITGIFILIVLRGGLI), and 313–334 (VINLLAIIISFLVSFLVSCMLL). A PTS EIIB type-2 domain is found at 379–475 (RNIIFACDAG…YLVENNLDNN (97 aa)). The active-site Phosphocysteine intermediate; for EIIB activity is the C385. Phosphocysteine; by EIIA is present on C385. The PTS EIIA type-2 domain maps to 496–638 (FSLTKENIFL…DDVLYLFSRK (143 aa)). The Tele-phosphohistidine intermediate; for EIIA activity role is filled by H556. Position 556 is a phosphohistidine; by HPr (H556).

Homodimer. An intramolecular phosphotransfer takes places between His-556 and Cys-385.

It is found in the cell inner membrane. It carries out the reaction D-mannitol(out) + N(pros)-phospho-L-histidyl-[protein] = D-mannitol 1-phosphate(in) + L-histidyl-[protein]. The phosphoenolpyruvate-dependent sugar phosphotransferase system (sugar PTS), a major carbohydrate active transport system, catalyzes the phosphorylation of incoming sugar substrates concomitantly with their translocation across the cell membrane. This system is involved in D-mannitol transport. This chain is PTS system mannitol-specific EIICBA component (mtlA), found in Buchnera aphidicola subsp. Baizongia pistaciae (strain Bp).